Consider the following 1225-residue polypeptide: DNA-directed RNA polymerase subunit beta' (1225 aa).

Cys60, Cys62, Cys75, and Cys78 together coordinate Zn(2+). Residues Asp450, Asp452, and Asp454 each contribute to the Mg(2+) site. Residues Cys818, Cys892, Cys899, and Cys902 each coordinate Zn(2+).

This sequence belongs to the RNA polymerase beta' chain family. The RNAP catalytic core consists of 2 alpha, 1 beta, 1 beta' and 1 omega subunit. When a sigma factor is associated with the core the holoenzyme is formed, which can initiate transcription. The cofactor is Mg(2+). It depends on Zn(2+) as a cofactor.

It catalyses the reaction RNA(n) + a ribonucleoside 5'-triphosphate = RNA(n+1) + diphosphate. Functionally, DNA-dependent RNA polymerase catalyzes the transcription of DNA into RNA using the four ribonucleoside triphosphates as substrates. The chain is DNA-directed RNA polymerase subunit beta' from Streptococcus pneumoniae (strain Hungary19A-6).